A 226-amino-acid chain; its full sequence is Enolase-phosphatase E1 (226 aa).

The protein belongs to the HAD-like hydrolase superfamily. MasA/MtnC family. As to quaternary structure, monomer. Mg(2+) is required as a cofactor.

The enzyme catalyses 5-methylsulfanyl-2,3-dioxopentyl phosphate + H2O = 1,2-dihydroxy-5-(methylsulfanyl)pent-1-en-3-one + phosphate. The protein operates within amino-acid biosynthesis; L-methionine biosynthesis via salvage pathway; L-methionine from S-methyl-5-thio-alpha-D-ribose 1-phosphate: step 3/6. Its pathway is amino-acid biosynthesis; L-methionine biosynthesis via salvage pathway; L-methionine from S-methyl-5-thio-alpha-D-ribose 1-phosphate: step 4/6. Functionally, bifunctional enzyme that catalyzes the enolization of 2,3-diketo-5-methylthiopentyl-1-phosphate (DK-MTP-1-P) into the intermediate 2-hydroxy-3-keto-5-methylthiopentenyl-1-phosphate (HK-MTPenyl-1-P), which is then dephosphorylated to form the acireductone 1,2-dihydroxy-3-keto-5-methylthiopentene (DHK-MTPene). The sequence is that of Enolase-phosphatase E1 from Shewanella frigidimarina (strain NCIMB 400).